A 293-amino-acid chain; its full sequence is MDSGLRSLLSDHSRYVESFRLFLQNSTEHQCMQHFIETKLPDIISSIGNDKPVIDVLGIGSGSGEIDLQMIAKIQARWPGVSINNQIVEPSAEQILGYKERVAKAPNLGYVTFSWHHQTSSEFEHRVTEDKQMTKYDFIHMIQMLYYVKDVPGTLKFFKSCLAPNGKLLIILVSGNSGWAPLWKKYGQRLPLNDLCLYVTAGDIAEMLSSMGARFQSHELQSDMDITKCFIEGDKNGELLLDFLTETCDFRKNAPAELRDQIICDLKSPRCSTTKDGKVIFNNNLSVIVVEAD.

Glutamate 28 contributes to the substrate binding site. S-adenosyl-L-methionine is bound by residues glycine 60, glutamate 89, glutamine 94, serine 120, and isoleucine 142. Asparagine 283 is a binding site for substrate.

This sequence belongs to the class I-like SAM-binding methyltransferase superfamily. HNMT family. As to quaternary structure, monomer.

The protein localises to the cytoplasm. The enzyme catalyses histamine + S-adenosyl-L-methionine = N(tau)-methylhistamine + S-adenosyl-L-homocysteine + H(+). Its function is as follows. Inactivates histamine by N-methylation. Plays an important role in degrading histamine and in regulating the airway response to histamine. This is Histamine N-methyltransferase B (hnmt-b) from Xenopus laevis (African clawed frog).